Here is a 353-residue protein sequence, read N- to C-terminus: S-adenosylmethionine:tRNA ribosyltransferase-isomerase (353 aa).

Belongs to the QueA family. As to quaternary structure, monomer.

It localises to the cytoplasm. It catalyses the reaction 7-aminomethyl-7-carbaguanosine(34) in tRNA + S-adenosyl-L-methionine = epoxyqueuosine(34) in tRNA + adenine + L-methionine + 2 H(+). Its pathway is tRNA modification; tRNA-queuosine biosynthesis. In terms of biological role, transfers and isomerizes the ribose moiety from AdoMet to the 7-aminomethyl group of 7-deazaguanine (preQ1-tRNA) to give epoxyqueuosine (oQ-tRNA). The chain is S-adenosylmethionine:tRNA ribosyltransferase-isomerase from Paraburkholderia phymatum (strain DSM 17167 / CIP 108236 / LMG 21445 / STM815) (Burkholderia phymatum).